The chain runs to 411 residues: Protrudin (411 aa).

Residues 1-27 (MQTSEREGSGPELSPSVMPEAPLESPP) are disordered. Residues 1-66 (MQTSEREGSG…AGDGVRYLLR (66 aa)) are Cytoplasmic-facing. Residues 1–92 (MQTSEREGSG…LFLTLNEGAW (92 aa)) are sufficient for homooligomerization. The tract at residues 1–205 (MQTSEREGSG…LYLLPLCWVL (205 aa)) is sufficient for localization to endoplasmic reticulum tubular network and for interactions with REEP1, REEP5, ATL1, ATL2, ATL3 and SPAST. Residues 51–64 (LEPLKDAGDGVRYL) form a necessary for interaction with RAB11A and function in neurite outgrowth region. A helical transmembrane segment spans residues 67 to 87 (WQMPLCSLLTCLGLNVLFLTL). Residue N88 is a topological domain, lumenal. Residues 89–109 (EGAWYSVGALMISVPALLGYL) form a helical membrane-spanning segment. Topologically, residues 110-187 (QEVCRARLPD…NPVVSSQFYG (78 aa)) are cytoplasmic. The segment at residues 188–208 (ALLGTVCMLYLLPLCWVLTLL) is an intramembrane region (helical). The Cytoplasmic segment spans residues 209 to 411 (NSTLFLGNVE…CASCNQTLSK (203 aa)). Residues 234 to 286 (MNPKQEEHAFESPPPPDVGGKDGLMDSTPALTPTEDLTPGSVEEAEEAEPDEE) are disordered. The segment at 271-361 (TPGSVEEAEE…GCSATFSVLK (91 aa)) is necessary for interaction with KIF5A. Residues 276-286 (EEAEEAEPDEE) show a composition bias toward acidic residues. The segment at 286 to 292 (EFKDAIE) is necessary for interaction with VAPA and function in cell projections formation. Residues 344-410 (TNNFGNCTGC…VCASCNQTLS (67 aa)) form an FYVE-type zinc finger. 8 residues coordinate Zn(2+): C350, C353, C366, C369, C374, C377, C402, and C405.

As to quaternary structure, can form homooligomers (monomers, dimers and tetramers). Interacts with RAB11A (GDP-bound form); regulates RAB11A. Interacts with FKBP8; may negatively regulate ZFYVE27 phosphorylation. Interacts with VAPA (via MSP domain); may regulate ZFYVE27 retention in the endoplasmic reticulum and its function in cell projections formation. Interacts with VAPB (via MSP domain). Interacts with REEP1, REEP5 and ATL1. Interacts with ATL2, ATL3 and SPAST. Interacts with KIF5A and RTN3. Interacts with RAB11B (GDP-bound form), SURF4, KIF5B and KIF5C. Phosphorylated. Phosphorylation is induced by NGF through the MAPK/ERK pathway and modulates interaction with RAB11A.

Its subcellular location is the recycling endosome membrane. The protein localises to the endoplasmic reticulum membrane. It localises to the cell projection. The protein resides in the growth cone membrane. Functionally, key regulator of RAB11-dependent vesicular trafficking during neurite extension through polarized membrane transport. Promotes axonal elongation and contributes to the establishment of neuronal cell polarity. Involved in nerve growth factor-induced neurite formation in VAPA-dependent manner. Contributes to both the formation and stabilization of the tubular ER network. Involved in ER morphogenesis by regulating the sheet-to-tubule balance and possibly the density of tubule interconnections. Acts as an adapter protein and facilitates the interaction of KIF5A with VAPA, VAPB, SURF4, RAB11A, RAB11B and RTN3 and the ZFYVE27-KIF5A complex contributes to the transport of these proteins in neurons. Can induce formation of neurite-like membrane protrusions in non-neuronal cells in a KIF5A/B-dependent manner. This chain is Protrudin (ZFYVE27), found in Homo sapiens (Human).